We begin with the raw amino-acid sequence, 311 residues long: UDP-N-acetylenolpyruvoylglucosamine reductase (311 aa).

The 163-residue stretch at 29-191 folds into the FAD-binding PCMH-type domain; that stretch reads IGGKADIVLK…LSARLKLKPI (163 aa). The active site involves Arg172. Catalysis depends on Ser223, which acts as the Proton donor. Residue Glu299 is part of the active site.

Belongs to the MurB family. The cofactor is FAD.

The protein resides in the cytoplasm. The enzyme catalyses UDP-N-acetyl-alpha-D-muramate + NADP(+) = UDP-N-acetyl-3-O-(1-carboxyvinyl)-alpha-D-glucosamine + NADPH + H(+). The protein operates within cell wall biogenesis; peptidoglycan biosynthesis. Cell wall formation. This is UDP-N-acetylenolpyruvoylglucosamine reductase from Chloroherpeton thalassium (strain ATCC 35110 / GB-78).